A 122-amino-acid polypeptide reads, in one-letter code: Large ribosomal subunit protein uL14 (122 aa).

Belongs to the universal ribosomal protein uL14 family. In terms of assembly, part of the 50S ribosomal subunit. Forms a cluster with proteins L3 and L19. In the 70S ribosome, L14 and L19 interact and together make contacts with the 16S rRNA in bridges B5 and B8.

Functionally, binds to 23S rRNA. Forms part of two intersubunit bridges in the 70S ribosome. This chain is Large ribosomal subunit protein uL14, found in Oleidesulfovibrio alaskensis (strain ATCC BAA-1058 / DSM 17464 / G20) (Desulfovibrio alaskensis).